A 707-amino-acid chain; its full sequence is Transcription termination factor Rho (707 aa).

Disordered stretches follow at residues 1 to 38 (MSDT…RRGT) and 76 to 321 (QAAG…DEIQ). Composition is skewed to low complexity over residues 16 to 31 (AAAP…TGAG) and 76 to 93 (QAAG…ADTA). Basic and acidic residues predominate over residues 107-132 (RTGDEAPAEKAEKAGKADKKADKAAA). The span at 153–163 (ASAEQAAPADD) shows a compositional bias: low complexity. Residues 176–188 (DAGSPSATDTTVA) are compositionally biased toward polar residues. The span at 203-213 (QQSQGHQQGQG) shows a compositional bias: low complexity. The segment covering 215 to 265 (ARSDAEGGDGRRRDRRDRGDRDRGDRGDRGDRGDRGDRGERGRDRRNKGDD) has biased composition (basic and acidic residues). Positions 301 to 315 (RRGRRGRYRDRRGRR) are enriched in basic residues. One can recognise a Rho RNA-BD domain in the interval 331-406 (LIPVAGILDI…VRLDSVNGMA (76 aa)). ATP is bound by residues 449 to 454 (GKGQRG), 461 to 466 (KTGKTM), and arginine 492.

The protein belongs to the Rho family. Homohexamer. The homohexamer assembles into an open ring structure.

Facilitates transcription termination by a mechanism that involves Rho binding to the nascent RNA, activation of Rho's RNA-dependent ATPase activity, and release of the mRNA from the DNA template. The polypeptide is Transcription termination factor Rho (Streptomyces lividans).